A 152-amino-acid chain; its full sequence is ASP external chaperone (152 aa).

The first 22 residues, 1–22, serve as a signal peptide directing secretion; it reads MNKPVTLLLATLLAPLSGQLCA.

Forms a complex with the serine protease ASP in the periplasm. After translocation of the ASP-ORF2 complex from the periplasm to the extracellular space, the complex is dissociated in a pH-dependent manner.

The protein localises to the periplasm. It localises to the secreted. Its activity is regulated as follows. Degraded by ASP after secretion and dissociation of the ASP-ORF2 complex. Functionally, required for the production of the active form of the Aeromonas extracellular serine protease (ASP). Acts as a chaperone that helps ASP form an active structure in the periplasm. Formation of a complex with ASP in the periplasm also inactivates the protease activity and likely protects ASP from intrinsic proteases. Dissociation of the ASP-ORF2 complex after secretion in the extracellular space generates an active ASP. This Aeromonas sobria protein is ASP external chaperone.